Here is a 308-residue protein sequence, read N- to C-terminus: Ribosomal RNA large subunit methyltransferase F (308 aa).

The protein belongs to the methyltransferase superfamily. METTL16/RlmF family.

The protein localises to the cytoplasm. The enzyme catalyses adenosine(1618) in 23S rRNA + S-adenosyl-L-methionine = N(6)-methyladenosine(1618) in 23S rRNA + S-adenosyl-L-homocysteine + H(+). Specifically methylates the adenine in position 1618 of 23S rRNA. The protein is Ribosomal RNA large subunit methyltransferase F of Shigella dysenteriae serotype 1 (strain Sd197).